Here is an 89-residue protein sequence, read N- to C-terminus: Small ribosomal subunit protein uS14A (89 aa).

The tract at residues 29 to 62 (AAGDRTALAKLPRDSNPNRLRLRDQTDGRPRGYM) is disordered. Residues 49–58 (RLRDQTDGRP) are compositionally biased toward basic and acidic residues.

The protein belongs to the universal ribosomal protein uS14 family. In terms of assembly, part of the 30S ribosomal subunit. Contacts proteins S3 and S10.

In terms of biological role, binds 16S rRNA, required for the assembly of 30S particles and may also be responsible for determining the conformation of the 16S rRNA at the A site. The sequence is that of Small ribosomal subunit protein uS14A from Enterococcus faecalis (strain ATCC 700802 / V583).